Consider the following 121-residue polypeptide: Small ribosomal subunit protein uS13 (121 aa).

The interval 91–121 (HRKGLPMRGQRTRTNARTRKGPRKAGVALKK) is disordered.

Belongs to the universal ribosomal protein uS13 family. As to quaternary structure, part of the 30S ribosomal subunit. Forms a loose heterodimer with protein S19. Forms two bridges to the 50S subunit in the 70S ribosome.

Its function is as follows. Located at the top of the head of the 30S subunit, it contacts several helices of the 16S rRNA. In the 70S ribosome it contacts the 23S rRNA (bridge B1a) and protein L5 of the 50S subunit (bridge B1b), connecting the 2 subunits; these bridges are implicated in subunit movement. Contacts the tRNAs in the A and P-sites. The sequence is that of Small ribosomal subunit protein uS13 from Cupriavidus taiwanensis (strain DSM 17343 / BCRC 17206 / CCUG 44338 / CIP 107171 / LMG 19424 / R1) (Ralstonia taiwanensis (strain LMG 19424)).